The primary structure comprises 354 residues: Hyaluronan and proteoglycan link protein 1 (354 aa).

A propeptide spanning residues Met1–Leu9 is cleaved from the precursor. In terms of domain architecture, Ig-like V-type spans Pro38–Val152. Residue Asn56 is glycosylated (N-linked (GlcNAc...) asparagine). 5 disulfides stabilise this stretch: Cys61-Cys139, Cys181-Cys252, Cys205-Cys226, Cys279-Cys349, and Cys304-Cys325. 2 Link domains span residues Val159 to Thr254 and Gly259 to Arg351.

Belongs to the HAPLN family.

The protein resides in the secreted. Its subcellular location is the extracellular space. It is found in the extracellular matrix. Its function is as follows. Stabilizes the aggregates of proteoglycan monomers with hyaluronic acid in the extracellular cartilage matrix. This is Hyaluronan and proteoglycan link protein 1 (Hapln1) from Rattus norvegicus (Rat).